The following is a 577-amino-acid chain: Arginine--tRNA ligase (577 aa).

Residues 122–132 carry the 'HIGH' region motif; sequence PNVAKEMHVGH.

Belongs to the class-I aminoacyl-tRNA synthetase family. As to quaternary structure, monomer.

The protein resides in the cytoplasm. It carries out the reaction tRNA(Arg) + L-arginine + ATP = L-arginyl-tRNA(Arg) + AMP + diphosphate. The chain is Arginine--tRNA ligase from Salmonella paratyphi B (strain ATCC BAA-1250 / SPB7).